We begin with the raw amino-acid sequence, 362 residues long: 1-aminocyclopropane-1-carboxylate oxidase homolog 10 (362 aa).

The region spanning 211–310 (KGLFMLCHYY…RISVACFFSS (100 aa)) is the Fe2OG dioxygenase domain. Positions 235, 237, and 291 each coordinate Fe cation. Arg-301 lines the 2-oxoglutarate pocket.

This sequence belongs to the iron/ascorbate-dependent oxidoreductase family. The cofactor is Fe(2+).

The polypeptide is 1-aminocyclopropane-1-carboxylate oxidase homolog 10 (Arabidopsis thaliana (Mouse-ear cress)).